A 359-amino-acid chain; its full sequence is WW domain-binding protein wbp-11 (359 aa).

3 disordered regions span residues M1–Q38, P235–G264, and P317–A341. A compositionally biased stretch (basic and acidic residues) spans K8–K27. Residues M245–A256 show a composition bias toward basic residues.

Its function is as follows. Activates pre-mRNA splicing. May inhibit PP1 phosphatase activity. The polypeptide is WW domain-binding protein wbp-11 (Caenorhabditis elegans).